We begin with the raw amino-acid sequence, 348 residues long: Chitinase (348 aa).

Positions 1–29 (MKLKKIIPAFPLLSTVAVGLWLTPTQASA) are cleaved as a signal peptide. Residues 42–348 (KVLVGYWHNW…FATRYSNLVK (307 aa)) enclose the GH18 domain. Catalysis depends on E161, which acts as the Proton donor.

It belongs to the glycosyl hydrolase 18 family.

It is found in the secreted. It catalyses the reaction Random endo-hydrolysis of N-acetyl-beta-D-glucosaminide (1-&gt;4)-beta-linkages in chitin and chitodextrins.. It functions in the pathway glycan degradation; chitin degradation. Its function is as follows. Involved in chitin degradation. Catalyzes the cleavage of glycosidic linkages in chitooligosaccharides and in alpha- and beta-chitin. Its activity on chitooligosaccharides increases considerably with degrees of polymerization (the initial rate of hydrolysis for GlcNAc5 is about 130-fold higher than that for GlcNAc3). Its activity is greatly stimulated in the presence of the lytic chitin monooxygenase EfCBM33A, which attacks the crystalline structure of chitin and makes the polymer more accessible to the chitinase; combining the two enzymes leads to rapid and complete depolymerization of crystalline chitin, especially with beta-chitin as a substrate. Is likely involved in a chitin degradation pathway that allows E.faecalis V583 to grow on chitin as a carbon source. This Enterococcus faecalis (strain ATCC 700802 / V583) protein is Chitinase.